Here is a 74-residue protein sequence, read N- to C-terminus: U-scoloptoxin(09)-Sm3a (74 aa).

A signal peptide spans 1–22 (MNANSIFLCFFIMLIGCTLTHS).

This sequence belongs to the scoloptoxin-09 family. Post-translationally, contains 3 disulfide bonds. Expressed by the venom gland.

It is found in the secreted. The sequence is that of U-scoloptoxin(09)-Sm3a from Scolopendra morsitans (Tanzanian blue ringleg centipede).